A 325-amino-acid chain; its full sequence is Putative gluconeogenesis factor (325 aa).

The protein belongs to the gluconeogenesis factor family.

Its subcellular location is the cytoplasm. Functionally, required for morphogenesis under gluconeogenic growth conditions. The protein is Putative gluconeogenesis factor of Streptococcus pyogenes serotype M3 (strain ATCC BAA-595 / MGAS315).